The chain runs to 304 residues: Acetylglutamate kinase (304 aa).

Substrate contacts are provided by residues 77 to 78 (GG), R99, and N193.

The protein belongs to the acetylglutamate kinase family. ArgB subfamily.

It is found in the cytoplasm. It carries out the reaction N-acetyl-L-glutamate + ATP = N-acetyl-L-glutamyl 5-phosphate + ADP. Its pathway is amino-acid biosynthesis; L-arginine biosynthesis; N(2)-acetyl-L-ornithine from L-glutamate: step 2/4. Its function is as follows. Catalyzes the ATP-dependent phosphorylation of N-acetyl-L-glutamate. The polypeptide is Acetylglutamate kinase (Pelodictyon phaeoclathratiforme (strain DSM 5477 / BU-1)).